The following is a 516-amino-acid chain: 2-isopropylmalate synthase (516 aa).

Residues 8-270 form the Pyruvate carboxyltransferase domain; it reads IYIFDTTLRD…YTGIKTESIY (263 aa). 4 residues coordinate Mn(2+): Asp-17, His-205, His-207, and Asn-241. A regulatory domain region spans residues 394–516; sequence KLIYLNVVSG…DAGKIKSEYE (123 aa).

Belongs to the alpha-IPM synthase/homocitrate synthase family. LeuA type 1 subfamily. In terms of assembly, homodimer. Mn(2+) serves as cofactor.

It is found in the cytoplasm. It catalyses the reaction 3-methyl-2-oxobutanoate + acetyl-CoA + H2O = (2S)-2-isopropylmalate + CoA + H(+). It participates in amino-acid biosynthesis; L-leucine biosynthesis; L-leucine from 3-methyl-2-oxobutanoate: step 1/4. In terms of biological role, catalyzes the condensation of the acetyl group of acetyl-CoA with 3-methyl-2-oxobutanoate (2-ketoisovalerate) to form 3-carboxy-3-hydroxy-4-methylpentanoate (2-isopropylmalate). The chain is 2-isopropylmalate synthase from Syntrophus aciditrophicus (strain SB).